Reading from the N-terminus, the 327-residue chain is Phosphate acyltransferase (327 aa).

This sequence belongs to the PlsX family. As to quaternary structure, homodimer. Probably interacts with PlsY.

Its subcellular location is the cytoplasm. The enzyme catalyses a fatty acyl-[ACP] + phosphate = an acyl phosphate + holo-[ACP]. Its pathway is lipid metabolism; phospholipid metabolism. In terms of biological role, catalyzes the reversible formation of acyl-phosphate (acyl-PO(4)) from acyl-[acyl-carrier-protein] (acyl-ACP). This enzyme utilizes acyl-ACP as fatty acyl donor, but not acyl-CoA. The polypeptide is Phosphate acyltransferase (Thermotoga neapolitana (strain ATCC 49049 / DSM 4359 / NBRC 107923 / NS-E)).